The chain runs to 777 residues: Ral guanine nucleotide dissociation stimulator-like 2 (777 aa).

Positions M1–P54 are disordered. S13 is modified (phosphoserine). A compositionally biased stretch (gly residues) spans G31–G42. The segment covering Q43–P54 has biased composition (acidic residues). The N-terminal Ras-GEF domain maps to S88–R212. One can recognise a Ras-GEF domain in the interval L243 to P513. S409 carries the phosphoserine modification. 2 stretches are compositionally biased toward low complexity: residues S581–P610 and A618–S632. 2 disordered regions span residues S581 to P644 and R734 to K766. A compositionally biased stretch (gly residues) spans G633–P644. In terms of domain architecture, Ras-associating spans D648–R735. A compositionally biased stretch (low complexity) spans T740–S755.

As to quaternary structure, interacts with SAMD9.

In terms of biological role, probable guanine nucleotide exchange factor. Putative effector of Ras and/or Rap. Associates with the GTP-bound form of Rap 1A and H-Ras in vitro. The sequence is that of Ral guanine nucleotide dissociation stimulator-like 2 (RGL2) from Homo sapiens (Human).